The following is a 250-amino-acid chain: NAD(P)H-quinone oxidoreductase subunit K (250 aa).

Residues C60, C61, C125, and C156 each contribute to the [4Fe-4S] cluster site. Residues 230–250 (ELNTPEIDVSPASQSSSTYES) are disordered. The span at 240 to 250 (PASQSSSTYES) shows a compositional bias: polar residues.

It belongs to the complex I 20 kDa subunit family. In terms of assembly, NDH-1 can be composed of about 15 different subunits; different subcomplexes with different compositions have been identified which probably have different functions. [4Fe-4S] cluster is required as a cofactor.

Its subcellular location is the cellular thylakoid membrane. It carries out the reaction a plastoquinone + NADH + (n+1) H(+)(in) = a plastoquinol + NAD(+) + n H(+)(out). The catalysed reaction is a plastoquinone + NADPH + (n+1) H(+)(in) = a plastoquinol + NADP(+) + n H(+)(out). Functionally, NDH-1 shuttles electrons from an unknown electron donor, via FMN and iron-sulfur (Fe-S) centers, to quinones in the respiratory and/or the photosynthetic chain. The immediate electron acceptor for the enzyme in this species is believed to be plastoquinone. Couples the redox reaction to proton translocation, and thus conserves the redox energy in a proton gradient. Cyanobacterial NDH-1 also plays a role in inorganic carbon-concentration. The sequence is that of NAD(P)H-quinone oxidoreductase subunit K from Prochlorococcus marinus (strain MIT 9313).